Consider the following 647-residue polypeptide: Sodium/nucleoside cotransporter 1 (647 aa).

Residues 1-79 (MEDNTPRQRD…VRRFCREHTQ (79 aa)) lie on the Cytoplasmic side of the membrane. Residues 34 to 58 (EGRAPGSDSSPAEVGGGWSKAGPEH) are disordered. The helical transmembrane segment at 80–103 (LFRWICTGLLCTAFAAFLLIACLL) threads the bilayer. Over 104–108 (DFQRA) the chain is Extracellular. The helical transmembrane segment at 109–127 (LALFVLFCVVLFFLAHSLL) threads the bilayer. The Cytoplasmic segment spans residues 128–146 (KRLLGPKLLRCVKPLRHPC). The helical transmembrane segment at 147–166 (LNLWFKRGLALAAFLGLVLW) threads the bilayer. The Extracellular segment spans residues 167-177 (LVLDTAQRPEQ). A helical transmembrane segment spans residues 178–194 (LVSFGGICVFILLLFAG). The Cytoplasmic segment spans residues 195 to 200 (SKHHRA). A helical membrane pass occupies residues 201 to 221 (VSWRAVSWGLGLQFALGLFVI). The Extracellular segment spans residues 222-260 (RTEPGFIAFQWLGDQIQIFLSYTEAGSSFVFGEALVKDV). A helical transmembrane segment spans residues 261–282 (FAFQVLPIIVFFSCAMSVLYYV). Over 283–293 (GLMQWVILKIS) the chain is Cytoplasmic. Residues 294 to 317 (WLMQATMGTTATETLSVAGNIFVS) traverse the membrane as a helical segment. Over 318–336 (QTEAPLLIRPYLADMTLSE) the chain is Extracellular. A helical membrane pass occupies residues 337-359 (IHVVMTGGYATIAGSLLGAYISF). The Cytoplasmic portion of the chain corresponds to 360–365 (GIDAAS). A helical transmembrane segment spans residues 366-385 (LIAASVMAAPCALALSKLVY). The Extracellular portion of the chain corresponds to 386–422 (PEVEESKFKREEGVKLTYGDAQNLLEAASSGAAMSVR). The chain crosses the membrane as a helical span at residues 423-445 (VVTNIAANLIAFLAVLAFINAAL). At 446–456 (SWLGDMVDVQG) the chain is on the cytoplasmic side. A helical membrane pass occupies residues 457–478 (LSFQLICSYVLRPVAFLMGVAW). The Extracellular portion of the chain corresponds to 479 to 533 (EDCPVVAELLGMKLFLNEFVAYQELSGYKQRRLAGAEEWVGSRKQWISVRAEILT). The chain crosses the membrane as a helical span at residues 534–557 (TYALCGFANFSSIGIMLGGLTSMV). At 558–568 (PQRKGDFSQIV) the chain is on the cytoplasmic side. A helical membrane pass occupies residues 569 to 591 (LRALCTGACVSLVNACVAGILYV). At 592 to 647 (PRGAEVDCVSFLNTTLSSSSFEVYQCCRQFFQSTSLEFSPEALDNCCRFYNHTICV) the chain is on the extracellular side. Residues asparagine 604 and asparagine 642 are each glycosylated (N-linked (GlcNAc...) asparagine).

Belongs to the concentrative nucleoside transporter (CNT) (TC 2.A.41) family. N-glycosylated. N-glycosylation is required for localization to the plasma membrane and the transporter activity.

It localises to the cell membrane. The protein localises to the apical cell membrane. It catalyses the reaction uridine(out) + Na(+)(out) = uridine(in) + Na(+)(in). The enzyme catalyses thymidine(out) + Na(+)(out) = thymidine(in) + Na(+)(in). The catalysed reaction is cytidine(out) + Na(+)(out) = cytidine(in) + Na(+)(in). It carries out the reaction adenosine(out) + Na(+)(out) = adenosine(in) + Na(+)(in). Due to its high apparent affinity but slow transport, adenosine could act as a negative regulator of pyrimidine transport under some conditions. Sodium and pyrimidine nucleoside symporter of the plasma membrane that imports uridine, thymidine and cytidine into cells by coupling their transport to the transmembrane sodium electrochemical gradient. Also transports adenosine, an atypical substrate transported with high apparent affinity, but low maximum velocity. Therefore, exhibits the transport characteristics of the nucleoside transport system cit or N2 subtype (N2/cit). Involved in renal nucleoside (re)absorption. This Sus scrofa (Pig) protein is Sodium/nucleoside cotransporter 1 (SLC28A1).